A 34-amino-acid polypeptide reads, in one-letter code: Photosystem II reaction center protein M (34 aa).

A helical membrane pass occupies residues isoleucine 5–isoleucine 25.

The protein belongs to the PsbM family. As to quaternary structure, PSII is composed of 1 copy each of membrane proteins PsbA, PsbB, PsbC, PsbD, PsbE, PsbF, PsbH, PsbI, PsbJ, PsbK, PsbL, PsbM, PsbT, PsbX, PsbY, PsbZ, Psb30/Ycf12, at least 3 peripheral proteins of the oxygen-evolving complex and a large number of cofactors. It forms dimeric complexes.

It is found in the plastid. The protein resides in the chloroplast thylakoid membrane. One of the components of the core complex of photosystem II (PSII). PSII is a light-driven water:plastoquinone oxidoreductase that uses light energy to abstract electrons from H(2)O, generating O(2) and a proton gradient subsequently used for ATP formation. It consists of a core antenna complex that captures photons, and an electron transfer chain that converts photonic excitation into a charge separation. This subunit is found at the monomer-monomer interface. This chain is Photosystem II reaction center protein M, found in Triticum aestivum (Wheat).